We begin with the raw amino-acid sequence, 339 residues long: Methionine import ATP-binding protein MetN 1 (339 aa).

In terms of domain architecture, ABC transporter spans 2-241; sequence ISFNNVSKVY…PKTKTTQNFV (240 aa). 38-45 is a binding site for ATP; it reads GFSGAGKS.

This sequence belongs to the ABC transporter superfamily. Methionine importer (TC 3.A.1.24) family. As to quaternary structure, the complex is composed of two ATP-binding proteins (MetN), two transmembrane proteins (MetI) and a solute-binding protein (MetQ).

The protein resides in the cell membrane. The catalysed reaction is L-methionine(out) + ATP + H2O = L-methionine(in) + ADP + phosphate + H(+). It carries out the reaction D-methionine(out) + ATP + H2O = D-methionine(in) + ADP + phosphate + H(+). Its function is as follows. Part of the ABC transporter complex MetNIQ involved in methionine import. Responsible for energy coupling to the transport system. This Bacillus thuringiensis subsp. konkukian (strain 97-27) protein is Methionine import ATP-binding protein MetN 1.